Reading from the N-terminus, the 375-residue chain is Actin, cytoplasmic (375 aa).

The protein belongs to the actin family.

It is found in the cytoplasm. The protein localises to the cytoskeleton. It carries out the reaction ATP + H2O = ADP + phosphate + H(+). Functionally, actins are highly conserved proteins that are involved in various types of cell motility and are ubiquitously expressed in all eukaryotic cells. The protein is Actin, cytoplasmic (MIC-ACT-1) of Sterkiella nova (Ciliate).